The following is a 778-amino-acid chain: IQ domain-containing protein E (778 aa).

Disordered stretches follow at residues 1–71 and 83–108; these read MSLG…LSSR and SSKQGSVAQPPSPTLTSEHAWTHPPS. The span at 37-49 shows a compositional bias: low complexity; sequence KPPSTSPKSPYYS. Residues 83–101 are compositionally biased toward polar residues; that stretch reads SSKQGSVAQPPSPTLTSEH. The stretch at 157-323 forms a coiled coil; it reads LHMQKSDVDL…DLDRMLSNSP (167 aa). Ser322 is modified (phosphoserine). 4 disordered regions span residues 348-392, 443-462, 474-529, and 573-612; these read KKVS…EDLP, ETAREGEKGRQEQEQALREE, EEAK…SEER, and LVRSKVPDSRSPSLPGLLSPLNQSSPAPRVLSPISPAEEN. Over residues 352–362 the composition is skewed to low complexity; the sequence is SSESPKQSTSE. Residues 398-486 adopt a coiled-coil conformation; that stretch reads EEQEHLQGTV…KREEKNSFVA (89 aa). IQ domains lie at 553 to 582 and 615 to 644; these read LDEAATVLQAAFRGHLARSKLVRSKVPDSR and QEEAVIVIQSILRGYLAQARFIASCCREIA. A compositionally biased stretch (low complexity) spans 581 to 598; that stretch reads SRSPSLPGLLSPLNQSSP. The span at 651 to 662 shows a compositional bias: polar residues; it reads TVSLTPSGSASP. The disordered stretch occupies residues 651-778; that stretch reads TVSLTPSGSA…LPRKKSPSPF (128 aa). Ser661 carries the post-translational modification Phosphoserine. Residues 672–686 show a composition bias toward basic and acidic residues; it reads IRKELCASEELRETS. Pro residues predominate over residues 739–752; sequence PSPPELQPLSPPPV.

In terms of assembly, component of the EvC complex composed of EFCAB7, IQCE, EVC2 and EVC; built from two subcomplexes, EVC2:EVC and EFCAB7:IQCE. Interacts (via N-terminus) with EFCAB7 (via EF-hands 1 and 2); this interaction anchors the EVC-EVC2 complex in a signaling microdomain at the base of cilia and stimulates the Hedgehog (Hh) pathway. Interacts with EVC2 (via N-terminal end). Interacts with EVC.

The protein localises to the cell projection. It is found in the cilium membrane. Component of the EvC complex that positively regulates ciliary Hedgehog (Hh) signaling. Required for proper limb morphogenesis. The chain is IQ domain-containing protein E (Iqce) from Mus musculus (Mouse).